The chain runs to 305 residues: GTP cyclohydrolase FolE2 (305 aa).

It belongs to the GTP cyclohydrolase IV family.

It carries out the reaction GTP + H2O = 7,8-dihydroneopterin 3'-triphosphate + formate + H(+). It functions in the pathway cofactor biosynthesis; 7,8-dihydroneopterin triphosphate biosynthesis; 7,8-dihydroneopterin triphosphate from GTP: step 1/1. Functionally, converts GTP to 7,8-dihydroneopterin triphosphate. The sequence is that of GTP cyclohydrolase FolE2 from Xanthomonas euvesicatoria pv. vesicatoria (strain 85-10) (Xanthomonas campestris pv. vesicatoria).